A 249-amino-acid polypeptide reads, in one-letter code: 2,3-bisphosphoglycerate-dependent phosphoglycerate mutase (249 aa).

Residues 9-16, 22-23, Arg-61, 88-91, Lys-99, 115-116, and 184-185 contribute to the substrate site; these read RHGQSQWN, TG, ERHY, RR, and GN. The active-site Tele-phosphohistidine intermediate is the His-10. Glu-88 serves as the catalytic Proton donor/acceptor.

Belongs to the phosphoglycerate mutase family. BPG-dependent PGAM subfamily. As to quaternary structure, homodimer.

It carries out the reaction (2R)-2-phosphoglycerate = (2R)-3-phosphoglycerate. It functions in the pathway carbohydrate degradation; glycolysis; pyruvate from D-glyceraldehyde 3-phosphate: step 3/5. Functionally, catalyzes the interconversion of 2-phosphoglycerate and 3-phosphoglycerate. The chain is 2,3-bisphosphoglycerate-dependent phosphoglycerate mutase from Xanthomonas oryzae pv. oryzae (strain MAFF 311018).